The chain runs to 419 residues: Menaquinone reductase, integral membrane subunit (419 aa).

10 helical membrane passes run 23-43 (LSKFMMWMAFVFVFFGWGLYA), 61-81 (FGFGLWITFDLAVIALGAGAF), 98-118 (IINLAVIIGFLCYSGAMLVLV), 143-163 (VIFCITCYCLVLIIEYVPLIL), 176-196 (AVAHNFHVMMPLFAGIGAFLS), 221-241 (FFIWPWTFFLYVLSAVGSGPV), 270-290 (IAGTMLMVYLIFKFADTYAWA), 316-336 (LWAELFYCGLVPAIILIVPAL), 341-361 (VLFYSAAILDCIGITINRYVM), and 383-403 (WAEWGASVMIVAYAALVLSLS).

This sequence belongs to the NrfD family. In terms of assembly, the Qrc complex is composed of four subunits: QrcA, QrcB, QrcC and QrcD. Can form a supercomplex with the [NiFe] hydrogenase HynA1 and the tetraheme Type I cytochrome c3 TpIc(3), its physiological electron donors.

Its subcellular location is the cell inner membrane. Component of the respiratory Qrc complex, that catalyzes the reduction of the menaquinone pool using electrons transferred from the reduced periplasmic cytochrome c3, and which is probably involved in sulfate respiration. Is likely essential for growth on H(2) or formate since the periplasmic hydrogenases and/or formate dehydrogenases act as primary electron donors for the Qrc complex. The QrcD subunit anchors the protein complex to the membrane and likely interacts with the quinone pool. This Nitratidesulfovibrio vulgaris (strain ATCC 29579 / DSM 644 / CCUG 34227 / NCIMB 8303 / VKM B-1760 / Hildenborough) (Desulfovibrio vulgaris) protein is Menaquinone reductase, integral membrane subunit.